We begin with the raw amino-acid sequence, 79 residues long: MSKICQITGKKAMVGNNVSHSKRRTKRVFDVNLFRKKFYWVEQDCWVVLRISAAGLRLINKIGLDAAIKRAAEKGFLNA.

This sequence belongs to the bacterial ribosomal protein bL28 family.

In Porphyromonas gingivalis (strain ATCC 33277 / DSM 20709 / CIP 103683 / JCM 12257 / NCTC 11834 / 2561), this protein is Large ribosomal subunit protein bL28.